Here is a 298-residue protein sequence, read N- to C-terminus: MQEYRLVLVTGPSGAGRTTAINALEDMGYEVIDNLPLSFVPRLIEGPSIGRPIALGLDVRNRDFNATALIELIDRLTQDPRVALEVLYVDCSASELIRRYNQTRRRHPLAPAETPAEGVEREIDLLAPVRVRADHLIDTSEMSPHDLKAELSRWFDRGAATRLAVSVQSFSYKRGVPRGVDMIFDCRFLKNPYWVESLRALDGREASVADYISSDPRFAPFFEKLRDLVLFLLPAQLEEGKAHLSLGFGCTGGQHRSVAVAELLGNALAEAGWPVSKRHRELERRAAAVLPTHQGEKA.

11–18 (GPSGAGRT) lines the ATP pocket. GTP is bound at residue 58-61 (DVRN).

Belongs to the RapZ-like family.

Displays ATPase and GTPase activities. This chain is Nucleotide-binding protein RSKD131_3085, found in Cereibacter sphaeroides (strain KD131 / KCTC 12085) (Rhodobacter sphaeroides).